Reading from the N-terminus, the 359-residue chain is Histamine H2 receptor (359 aa).

Over 1-22 (MAPNGTASSFCLDSTACKITIT) the chain is Extracellular. Residue Asn-4 is glycosylated (N-linked (GlcNAc...) asparagine). The helical transmembrane segment at 23-44 (VVLAVLILITVAGNVVVCLAVG) threads the bilayer. The Cytoplasmic portion of the chain corresponds to 45–57 (LNRRLRNLTNCFI). A helical transmembrane segment spans residues 58–81 (VSLAITDLLLGLLVLPFSAIYQLS). Residues 82-92 (CKWSFGKVFCN) are Extracellular-facing. A disulfide bond links Cys-91 and Cys-174. Residues 93 to 114 (IYTSLDVMLCTASILNLFMISL) form a helical membrane-spanning segment. Residues 115–134 (DRYCAVMDPLRYPVLVTPVR) are Cytoplasmic-facing. The chain crosses the membrane as a helical span at residues 135–159 (VAISLVLIWVISITLSFLSIHLGWN). Residues 160–180 (SRNETSKGNHTTSKCKVQVNE) are Extracellular-facing. The chain crosses the membrane as a helical span at residues 181-204 (VYGLVDGLVTFYLPLLIMCITYYR). Topologically, residues 205-234 (IFKVARDQAKRINHISSWKAATIREHKATV) are cytoplasmic. The chain crosses the membrane as a helical span at residues 235-258 (TLAAVMGAFIICWFPYFTAFVYRG). At 259-267 (LRGDDAINE) the chain is on the extracellular side. Residues 268-289 (VLEAIVLWLGYANSALNPILYA) traverse the membrane as a helical segment. Over 290-359 (ALNRDFRTGY…VTAPQGATDR (70 aa)) the chain is Cytoplasmic. Residue Cys-305 is the site of S-palmitoyl cysteine attachment. Positions 316-340 (SLRSNASQLSRTQSREPRQQEEKPL) are disordered. A compositionally biased stretch (polar residues) spans 317-327 (LRSNASQLSRT). Residues 328–340 (QSREPRQQEEKPL) are compositionally biased toward basic and acidic residues.

This sequence belongs to the G-protein coupled receptor 1 family.

The protein localises to the cell membrane. Functionally, the H2 subclass of histamine receptors mediates gastric acid secretion. Also appears to regulate gastrointestinal motility and intestinal secretion. Possible role in regulating cell growth and differentiation. The activity of this receptor is mediated by G proteins which activate adenylyl cyclase and, through a separate G protein-dependent mechanism, the phosphoinositide/protein kinase (PKC) signaling pathway. In Gorilla gorilla gorilla (Western lowland gorilla), this protein is Histamine H2 receptor (HRH2).